Reading from the N-terminus, the 438-residue chain is UDP-N-acetylmuramoylalanine--D-glutamate ligase (438 aa).

Position 105-111 (105-111 (GSNGKTT)) interacts with ATP.

The protein belongs to the MurCDEF family.

The protein resides in the cytoplasm. The enzyme catalyses UDP-N-acetyl-alpha-D-muramoyl-L-alanine + D-glutamate + ATP = UDP-N-acetyl-alpha-D-muramoyl-L-alanyl-D-glutamate + ADP + phosphate + H(+). The protein operates within cell wall biogenesis; peptidoglycan biosynthesis. Cell wall formation. Catalyzes the addition of glutamate to the nucleotide precursor UDP-N-acetylmuramoyl-L-alanine (UMA). This is UDP-N-acetylmuramoylalanine--D-glutamate ligase from Oenococcus oeni (strain ATCC BAA-331 / PSU-1).